The primary structure comprises 259 residues: Adenosylcobinamide-GDP ribazoletransferase (259 aa).

The next 7 membrane-spanning stretches (helical) occupy residues 41–61, 67–87, 119–139, 148–168, 179–199, 200–220, and 237–257; these read AAIW…AIVF, FGLA…IATG, IGAY…NVLS, LFAL…FMHL, AGAG…GAIP, LLLL…LLFA, and TIGA…SVAL.

This sequence belongs to the CobS family. Mg(2+) is required as a cofactor.

The protein localises to the cell inner membrane. It carries out the reaction alpha-ribazole + adenosylcob(III)inamide-GDP = adenosylcob(III)alamin + GMP + H(+). The enzyme catalyses alpha-ribazole 5'-phosphate + adenosylcob(III)inamide-GDP = adenosylcob(III)alamin 5'-phosphate + GMP + H(+). It participates in cofactor biosynthesis; adenosylcobalamin biosynthesis; adenosylcobalamin from cob(II)yrinate a,c-diamide: step 7/7. Functionally, joins adenosylcobinamide-GDP and alpha-ribazole to generate adenosylcobalamin (Ado-cobalamin). Also synthesizes adenosylcobalamin 5'-phosphate from adenosylcobinamide-GDP and alpha-ribazole 5'-phosphate. This Mesorhizobium japonicum (strain LMG 29417 / CECT 9101 / MAFF 303099) (Mesorhizobium loti (strain MAFF 303099)) protein is Adenosylcobinamide-GDP ribazoletransferase.